An 87-amino-acid polypeptide reads, in one-letter code: uncharacterized protein (87 aa).

The disordered stretch occupies residues 52–87 (KWQPRPDANNSDTTTSTEDSTTDTETEYSTTEDELA). The span at 71-87 (STTDTETEYSTTEDELA) shows a compositional bias: acidic residues.

This is an uncharacterized protein from Autographa californica nuclear polyhedrosis virus (AcMNPV).